An 843-amino-acid polypeptide reads, in one-letter code: MGFLSKILDGNNKEIKQLGKLADKVIALEEKTAILTDEEIRNKTKQFQTELADIDNVKKQNDYLDKILPEAYALVREGSKRVFNMTPYKVQIMGGIAIHKGDIAEMRTGEGKTLTATMPTYLNALAGRGVHVITVNEYLSSVQSEEMAELYNFLGLTVGLNLNSKTTEEKREAYAQDITYSTNNELGFDYLRDNMVNYSEDRVMRPLHFAIIDEVDSILIDEARTPLIISGEAEKSTSLYTQANVFAKMLKQDEDYKYDEKTKSVHLTEQGADKAERMFKVENLYDVQNVDVISHINTALRAHVTLQRDVDYMVVDGEVLIVDQFTGRTMPGRRFSEGLHQAIEAKEGVQIQNESKTMASITFQNYFRMYNKLAGMTGTAKTEEEEFRNIYNMTVTQIPTNKPVQRNDKSDLIYISQKGKFDAVVEDVVEKHKAGQPVLLGTVAVETSEYISNLLKKRGIRHDVLNAKNHEREAEIVAGAGQKGAVTIATNMAGRGTDIKLGEGVEELGGLAVIGTERHESRRIDDQLRGRSGRQGDKGDSRFYLSLQDELMIRFGSERLQKMMSRLGLDDSTPIESKMVSRAVESAQKRVEGNNFDARKRILEYDEVLRKQREIIYNERNSIIDEEDSSQVVDAMLRSTLQRSINYYINTADDEPEYQPFIDYINDIFLQEGDITEDDIKGKDAEDIFEVVWAKIEAAYQSQKDILEEQMNEFERMILLRSIDSHWTDHIDTMDQLRQGIHLRSYAQQNPLRDYQNEGHELFDIMMQNIEEDTCKFILKSVVQVEDNIEREKTTEFGEAKHVSAEDGKEKVKPKPIVKGDQVGRNDDCPCGSGKKFKNCHGK.

Residues Gln91, 109–113, and Asp498 contribute to the ATP site; that span reads GEGKT. Positions 799–813 are enriched in basic and acidic residues; that stretch reads EAKHVSAEDGKEKVK. The tract at residues 799 to 826 is disordered; sequence EAKHVSAEDGKEKVKPKPIVKGDQVGRN. Positions 829, 831, 840, and 841 each coordinate Zn(2+).

The protein belongs to the SecA family. Monomer and homodimer. Part of the essential Sec protein translocation apparatus which comprises SecA, SecYEG and auxiliary proteins SecDF. Other proteins may also be involved. It depends on Zn(2+) as a cofactor.

The protein localises to the cell membrane. It localises to the cytoplasm. The catalysed reaction is ATP + H2O + cellular proteinSide 1 = ADP + phosphate + cellular proteinSide 2.. Part of the Sec protein translocase complex. Interacts with the SecYEG preprotein conducting channel. Has a central role in coupling the hydrolysis of ATP to the transfer of proteins into and across the cell membrane, serving as an ATP-driven molecular motor driving the stepwise translocation of polypeptide chains across the membrane. The polypeptide is Protein translocase subunit SecA 1 (Staphylococcus aureus (strain MRSA252)).